The primary structure comprises 363 residues: Cinnamyl alcohol dehydrogenase 2 (363 aa).

Cysteine 47 contacts Zn(2+). Threonine 49 lines the NADP(+) pocket. Zn(2+)-binding residues include histidine 69, glutamate 70, cysteine 100, cysteine 103, cysteine 106, cysteine 114, and cysteine 163. Residues threonine 167, 188–193, 211–216, threonine 251, glycine 275, and 298–300 each bind NADP(+); these read GLGGVG, SSSARK, and SFI.

Belongs to the zinc-containing alcohol dehydrogenase family. As to quaternary structure, homodimer. Requires Zn(2+) as cofactor. Expressed in roots behind the root tips in the pericycle region and layer of cortical cells adjacent to the exodermis. Expressed in vascular bundles and lateral veins of leaf sheaths and blades. Expressed in the vicinity of vascular bundles in the first internode below the inflorescence. Highly expressed in the culm.

It carries out the reaction (E)-cinnamyl alcohol + NADP(+) = (E)-cinnamaldehyde + NADPH + H(+). It catalyses the reaction (E)-coniferol + NADP(+) = (E)-coniferaldehyde + NADPH + H(+). The catalysed reaction is (E)-sinapyl alcohol + NADP(+) = (E)-sinapaldehyde + NADPH + H(+). The enzyme catalyses (E)-4-coumaroyl alcohol + NADP(+) = (E)-4-coumaraldehyde + NADPH + H(+). It carries out the reaction (E)-caffeyl alcohol + NADP(+) = (E)-caffeyl aldehyde + NADPH + H(+). It participates in aromatic compound metabolism; phenylpropanoid biosynthesis. Involved in lignin biosynthesis. Catalyzes the final step specific for the production of lignin monomers. Catalyzes the NADPH-dependent reduction of coniferaldehyde and sinapaldehyde to their respective alcohols. Plays the major role in monolignol biosynthesis. Functions cooperatively with COMT in the culm internodes for the biosynthesis of monolignols, the lignin precursors. May be involved in lignin biosynthesis in leaves and roots. The polypeptide is Cinnamyl alcohol dehydrogenase 2 (Oryza sativa subsp. japonica (Rice)).